The primary structure comprises 248 residues: N-acylneuraminate-9-phosphatase (248 aa).

Residue Asp-12 coordinates Mg(2+). Residues Leu-13, Asp-14, Thr-131, Asn-132, and Lys-164 each contribute to the phosphate site. Mg(2+) is bound at residue Asp-14. Mg(2+) is bound at residue Asp-189.

It belongs to the HAD-like hydrolase superfamily. NANP family. Requires Mg(2+) as cofactor.

It catalyses the reaction N-acetylneuraminate 9-phosphate + H2O = N-acetylneuraminate + phosphate. It carries out the reaction N-glycoloylneuraminate 9-phosphate + H2O = N-glycoloylneuraminate + phosphate. Its pathway is amino-sugar metabolism; N-acetylneuraminate biosynthesis. Its activity is regulated as follows. Inhibited by calcium. Inhibited by vanadate, sodium orthovanadate and phosphonate. Functionally, catalyzes the dephosphorylation of N-acylneuraminate 9-phosphate (Neu5Ac-9-P) to N-acetylneuraminic acid (Neu5Ac or sialic acid). Can also use N-glycoloylneuraminate 9-phosphate as substrate. The chain is N-acylneuraminate-9-phosphatase from Homo sapiens (Human).